The following is a 63-amino-acid chain: Large ribosomal subunit protein uL29 (63 aa).

Belongs to the universal ribosomal protein uL29 family.

The chain is Large ribosomal subunit protein uL29 from Haemophilus ducreyi (strain 35000HP / ATCC 700724).